The primary structure comprises 551 residues: HTH-type transcriptional regulator SgrR (551 aa).

The HTH marR-type domain occupies 1 to 116 (MPSARLQQQF…LVSHLGRSFR (116 aa)). Residues 26-49 (LNELAALLSCSRRHMRTLLNTMQD) constitute a DNA-binding region (H-T-H motif). The solute-binding stretch occupies residues 163 to 492 (ELEADIAHHW…IDWQADAARW (330 aa)).

Its function is as follows. Activates the small RNA gene sgrS under glucose-phosphate stress conditions as well as yfdZ. Represses its own transcription under both stress and non-stress conditions. Might act as a sensor of the intracellular accumulation of phosphoglucose by binding these molecules in its C-terminal solute-binding domain. This Shigella flexneri serotype 5b (strain 8401) protein is HTH-type transcriptional regulator SgrR.